We begin with the raw amino-acid sequence, 445 residues long: Mitochondrial enolase superfamily member 1 (445 aa).

Residues 24–26 (GSD), Y34, and K220 each bind substrate. The Proton donor/acceptor role is filled by K222. D250 serves as a coordination point for Mg(2+). Residues N252, E276, E305, 355-357 (HAG), and E386 each bind substrate. Positions 276 and 305 each coordinate Mg(2+). H355 is an active-site residue.

It belongs to the mandelate racemase/muconate lactonizing enzyme family. ENOSF1 subfamily. Mg(2+) is required as a cofactor.

The protein localises to the mitochondrion. The catalysed reaction is L-fuconate = 2-dehydro-3-deoxy-L-fuconate + H2O. Plays a role in the catabolism of L-fucose, a sugar that is part of the carbohydrates that are attached to cellular glycoproteins. Catalyzes the dehydration of L-fuconate to 2-keto-3-deoxy-L-fuconate by the abstraction of the 2-proton to generate an enediolate intermediate that is stabilized by the magnesium ion. May down-regulate thymidylate synthase activity, possibly already at the RNA level, by promoting the degradation of TYMS mRNA via an antisense RNA-based mechanism. The protein is Mitochondrial enolase superfamily member 1 (enosf1) of Xenopus laevis (African clawed frog).